A 118-amino-acid chain; its full sequence is Ribonuclease P protein component (118 aa).

The protein belongs to the RnpA family. As to quaternary structure, consists of a catalytic RNA component (M1 or rnpB) and a protein subunit.

The catalysed reaction is Endonucleolytic cleavage of RNA, removing 5'-extranucleotides from tRNA precursor.. In terms of biological role, RNaseP catalyzes the removal of the 5'-leader sequence from pre-tRNA to produce the mature 5'-terminus. It can also cleave other RNA substrates such as 4.5S RNA. The protein component plays an auxiliary but essential role in vivo by binding to the 5'-leader sequence and broadening the substrate specificity of the ribozyme. In Bifidobacterium animalis subsp. lactis (strain AD011), this protein is Ribonuclease P protein component.